The following is a 201-amino-acid chain: FMN-dependent NADH:quinone oxidoreductase (201 aa).

FMN is bound by residues serine 10, 16–18 (SQS), 95–98 (MYNF), and 139–142 (TTGG).

This sequence belongs to the azoreductase type 1 family. As to quaternary structure, homodimer. Requires FMN as cofactor.

It catalyses the reaction 2 a quinone + NADH + H(+) = 2 a 1,4-benzosemiquinone + NAD(+). It carries out the reaction N,N-dimethyl-1,4-phenylenediamine + anthranilate + 2 NAD(+) = 2-(4-dimethylaminophenyl)diazenylbenzoate + 2 NADH + 2 H(+). In terms of biological role, quinone reductase that provides resistance to thiol-specific stress caused by electrophilic quinones. Functionally, also exhibits azoreductase activity. Catalyzes the reductive cleavage of the azo bond in aromatic azo compounds to the corresponding amines. This is FMN-dependent NADH:quinone oxidoreductase from Tolumonas auensis (strain DSM 9187 / NBRC 110442 / TA 4).